Reading from the N-terminus, the 509-residue chain is MAERAALEELVKLQGERVRGLKQQKASAELIEEEVAKLLKLKAQLGPDESKQKFVLKTPKGTRDYSPRQMAVREKVFDVIIRCFKRHGAEVIDTPVFELKETLMGKYGEDSKLIYDLKDQGGELLSLRYDLTVPFARYLAMNKLTNIKRYHIAKVYRRDNPAMTRGRYREFYQCDFDIAGNFDPMIPDAECLKIMCEILSSLQIGDFLVKVNDRRILDGMFAICGVSDSKFRTICSSVDKLDKVSWEEVKNEMVGEKGLAPEVADRIGDYVQQHGGVSLVEQLLQDPKLSQSKQALEGLGDLKLLFEYLTLFGIDDKISFDLSLARGLDYYTGVIYEAVLLQTPAQAGEEPLGVGSVAAGGRYDGLVGMFDPKGRKVPCVGLSIGVERIFSIVEQRLEALEEKVRTTETQVLVASAQKKLLEERLKLVSELWDAGIKAELLYKKNPKLLNQLQYCEEAGIPLVAIIGEQELEDGVIKLRSVTSREEVDVRREDLVEEIKRRTGQPLCIC.

Alanine 2 is subject to N-acetylalanine. Positions 3–59 (ERAALEELVKLQGERVRGLKQQKASAELIEEEVAKLLKLKAQLGPDESKQKFVLKTP) constitute a WHEP-TRS domain. Serine 66 is modified (phosphoserine). L-histidine is bound by residues 130–132 (DLT), arginine 157, glutamine 173, aspartate 177, arginine 326, and 330–331 (YY). A Phosphoserine modification is found at serine 356.

This sequence belongs to the class-II aminoacyl-tRNA synthetase family. In terms of assembly, homodimer.

It localises to the cytoplasm. It catalyses the reaction tRNA(His) + L-histidine + ATP = L-histidyl-tRNA(His) + AMP + diphosphate + H(+). In terms of biological role, catalyzes the ATP-dependent ligation of histidine to the 3'-end of its cognate tRNA, via the formation of an aminoacyl-adenylate intermediate (His-AMP). Plays a role in axon guidance. This is Histidine--tRNA ligase, cytoplasmic (HARS1) from Pongo abelii (Sumatran orangutan).